Consider the following 461-residue polypeptide: Serine/threonine-protein kinase VHS1 (461 aa).

A Protein kinase domain is found at 12-337 (YLITSQIGEG…KEVSSITSFT (326 aa)). ATP contacts are provided by residues 18 to 26 (IGEGAYGLV) and K41. D185 functions as the Proton acceptor in the catalytic mechanism. Positions 384-433 (LSYTSSSEEEDGIKEGIDDDNGSRSGSFGTLDTDTGLHSSFTSTSCESDN) are disordered. The segment covering 390–403 (SEEEDGIKEGIDDD) has biased composition (acidic residues). Residues 406–433 (SRSGSFGTLDTDTGLHSSFTSTSCESDN) show a composition bias toward polar residues.

The protein belongs to the protein kinase superfamily. Ser/Thr protein kinase family.

It is found in the cytoplasm. The catalysed reaction is L-seryl-[protein] + ATP = O-phospho-L-seryl-[protein] + ADP + H(+). It catalyses the reaction L-threonyl-[protein] + ATP = O-phospho-L-threonyl-[protein] + ADP + H(+). Probable serine/threonine protein kinase involved in the G1-S transition. This chain is Serine/threonine-protein kinase VHS1 (VHS1), found in Saccharomyces cerevisiae (strain ATCC 204508 / S288c) (Baker's yeast).